Reading from the N-terminus, the 103-residue chain is Matrix Gla protein (103 aa).

An N-terminal signal peptide occupies residues 1 to 19 (MKSLVLLAILAALAVVTLC). 4-carboxyglutamate is present on E21. Residues S22, S25, and S28 each carry the phosphoserine modification. A Gla domain is found at 51–97 (RAKVQERIRERSKPVHELNREACDDYRLCERYAMVYGYNAAYNRYFR). E56, E60, E67, and E71 each carry 4-carboxyglutamate. A disulfide bridge connects residues C73 and C79. A propeptide spans 97–103 (RERRGAK) (removed in mature form; probably by carboxypeptidase N).

It belongs to the osteocalcin/matrix Gla protein family. Post-translationally, requires vitamin K-dependent gamma-carboxylation for its function.

Its subcellular location is the secreted. Associates with the organic matrix of bone and cartilage. Thought to act as an inhibitor of bone formation. This Pongo abelii (Sumatran orangutan) protein is Matrix Gla protein (MGP).